A 1642-amino-acid polypeptide reads, in one-letter code: Cholesterol transporter ABCA5 (1642 aa).

A helical membrane pass occupies residues 32-52 (SVQEILFPLFFLFWLILISMM). Residues asparagine 86 and asparagine 190 are each glycosylated (N-linked (GlcNAc...) asparagine). The next 6 membrane-spanning stretches (helical) occupy residues 220-240 (VILI…AIHI), 264-284 (LSWV…MAVI), 297-317 (IVIF…ALML), 327-347 (VGVV…LIVL), 355-375 (LVWL…AQVM), and 396-416 (LIIT…LAVY). N-linked (GlcNAc...) asparagine glycosylation occurs at asparagine 458. The region spanning 478 to 713 (IRISGIQKAY…WGIGYRLSMY (236 aa)) is the ABC transporter 1 domain. 514–521 (GHSGTGKS) provides a ligand contact to ATP. Residues 866-886 (LLLLLIFFAVQIFMFLVHHSF) form a helical membrane-spanning segment. Asparagine 919 carries an N-linked (GlcNAc...) asparagine glycan. A helical membrane pass occupies residues 967–987 (VFTAVFNSTMVYSLPVMMNII). A glycan (N-linked (GlcNAc...) asparagine) is linked at asparagine 996. The next 6 helical transmembrane spans lie at 1021 to 1041 (LYFQ…YFAM), 1071 to 1091 (VVDI…LFAF), 1102 to 1122 (FLAV…FTYI), 1139 to 1159 (FIYS…FFLG), 1164 to 1184 (AVFH…GCLI), and 1207 to 1227 (LLVA…LLQH). One can recognise an ABC transporter 2 domain in the interval 1290–1533 (IMVYNLHKEY…FGKGYFLEIK (244 aa)). ATP is bound at residue 1333–1340 (GPNGAGKS).

This sequence belongs to the ABC transporter superfamily. ABCA family. N-glycosylated. In terms of tissue distribution, expressed in testis, epididymis, lung and brain.

Its subcellular location is the lysosome membrane. It localises to the late endosome membrane. It is found in the golgi apparatus membrane. The protein localises to the cell membrane. The catalysed reaction is cholesterol(in) + ATP + H2O = cholesterol(out) + ADP + phosphate + H(+). Cholesterol efflux transporter in macrophages that is responsible for APOAI/high-density lipoproteins (HDL) formation at the plasma membrane under high cholesterol levels and participates in reverse cholesterol transport. May play a role in the processing of autolysosomes. This chain is Cholesterol transporter ABCA5, found in Rattus norvegicus (Rat).